The sequence spans 324 residues: Acetyl-coenzyme A carboxylase carboxyl transferase subunit alpha (324 aa).

The region spanning 44-297 is the CoA carboxyltransferase C-terminal domain; that stretch reads LEERAKQLRY…KAALLRNLAE (254 aa).

It belongs to the AccA family. In terms of assembly, acetyl-CoA carboxylase is a heterohexamer composed of biotin carboxyl carrier protein (AccB), biotin carboxylase (AccC) and two subunits each of ACCase subunit alpha (AccA) and ACCase subunit beta (AccD).

The protein resides in the cytoplasm. The enzyme catalyses N(6)-carboxybiotinyl-L-lysyl-[protein] + acetyl-CoA = N(6)-biotinyl-L-lysyl-[protein] + malonyl-CoA. It participates in lipid metabolism; malonyl-CoA biosynthesis; malonyl-CoA from acetyl-CoA: step 1/1. Component of the acetyl coenzyme A carboxylase (ACC) complex. First, biotin carboxylase catalyzes the carboxylation of biotin on its carrier protein (BCCP) and then the CO(2) group is transferred by the carboxyltransferase to acetyl-CoA to form malonyl-CoA. This Thermosynechococcus vestitus (strain NIES-2133 / IAM M-273 / BP-1) protein is Acetyl-coenzyme A carboxylase carboxyl transferase subunit alpha.